The chain runs to 643 residues: Protein ecdysoneless homolog (643 aa).

2 disordered regions span residues 428-458 (EFYNSKKERKNKGKEKQEAGSSSDANMNNFD) and 501-600 (IESM…FTPV). The segment covering 446-456 (AGSSSDANMNN) has biased composition (polar residues). Acidic residues predominate over residues 528–543 (MDFDDVEDDSEGEESN). Residues 564-580 (NSTLEKSFENVNQQHSS) show a composition bias toward polar residues. Over residues 581 to 592 (KQNEESSKTRDE) the composition is skewed to basic and acidic residues.

It belongs to the ECD family.

The polypeptide is Protein ecdysoneless homolog (Arabidopsis thaliana (Mouse-ear cress)).